The chain runs to 192 residues: MDNQFIFKYSWETLPKKWVKKIEKSEHGNRFDTNTDYLFQLLCFLKLHTYTRFQVLIDICGVDYPSRKRRFEVVYNLLSTRYNSRIRLQTCADEVTRISLVVSLFPSAGWWEREVWDMFGVSFINHPDLRRILTDYGFEGHPLRKDFPLSGYVEVRYDDPEKRVVSEPIEMTQEFRYFDFASPWEQRNGNEG.

It belongs to the complex I 30 kDa subunit family. As to quaternary structure, complex I is composed of about 45 different subunits. This is a component of the iron-sulfur (IP) fragment of the enzyme.

It is found in the mitochondrion inner membrane. It carries out the reaction a ubiquinone + NADH + 5 H(+)(in) = a ubiquinol + NAD(+) + 4 H(+)(out). Its function is as follows. Core subunit of the mitochondrial membrane respiratory chain NADH dehydrogenase (Complex I) that is believed to belong to the minimal assembly required for catalysis. Complex I functions in the transfer of electrons from NADH to the respiratory chain. The immediate electron acceptor for the enzyme is believed to be ubiquinone. The polypeptide is NADH dehydrogenase [ubiquinone] iron-sulfur protein 3 (NAD9) (Beta vulgaris (Sugar beet)).